The primary structure comprises 397 residues: Phosphoglycerate kinase (397 aa).

Substrate-binding positions include 21–23 (DFN), Arg-37, 60–63 (HLGR), Arg-119, and Arg-152. ATP-binding positions include Lys-203, Gly-294, Glu-325, and 354-357 (GGDS).

The protein belongs to the phosphoglycerate kinase family. As to quaternary structure, monomer.

It localises to the cytoplasm. It catalyses the reaction (2R)-3-phosphoglycerate + ATP = (2R)-3-phospho-glyceroyl phosphate + ADP. The protein operates within carbohydrate degradation; glycolysis; pyruvate from D-glyceraldehyde 3-phosphate: step 2/5. The protein is Phosphoglycerate kinase of Chlorobium chlorochromatii (strain CaD3).